The following is a 577-amino-acid chain: ER degradation-enhancing alpha-mannosidase-like protein 2 (577 aa).

Residues 1–21 form the signal peptide; it reads MPFRLLIPLGLVCVLLPLHHG. 4 N-linked (GlcNAc...) asparagine glycosylation sites follow: Asn-90, Asn-112, Asn-289, and Asn-450. The disordered stretch occupies residues 513–561; the sequence is PKRAQRKTVRSGPWEPQSGPATLSSPANQPREKQPAQQRTPLLSCPSQP. Composition is skewed to polar residues over residues 531 to 540 and 547 to 561; these read GPATLSSPAN and PAQQ…PSQP.

This sequence belongs to the glycosyl hydrolase 47 family. Post-translationally, N-glycosylated.

It is found in the endoplasmic reticulum lumen. Involved in the endoplasmic reticulum-associated degradation (ERAD) pathway that targets misfolded glycoproteins for degradation in an N-glycan-dependent manner. May initiate ERAD by promoting the first mannose trimming step of ERAD substrates, from Man9GlcNAc2 to Man8GlcNAc2. Seems to recognize and bind to exposed hydrophobic regions in target proteins. The sequence is that of ER degradation-enhancing alpha-mannosidase-like protein 2 from Mus musculus (Mouse).